Here is a 181-residue protein sequence, read N- to C-terminus: Sodium/potassium-transporting ATPase subunit beta-1-interacting protein 3 (181 aa).

4 consecutive transmembrane segments (helical) span residues 2–22 (GCCT…LSAL), 35–55 (APIL…FGTI), 62–82 (IMVY…IICF), and 152–172 (VQIL…SISM).

This sequence belongs to the NKAIN family. As to quaternary structure, interacts with ATP1B1. As to expression, detected in the brain only and specifically in neurons. Expressed in multiple regions such as cerebral cortex, thalamus, hippocampus, olfactory bulb and brainstem as well as in cerebellum with low expression in granular cell layer.

It localises to the cell membrane. In Mus musculus (Mouse), this protein is Sodium/potassium-transporting ATPase subunit beta-1-interacting protein 3 (Nkain3).